We begin with the raw amino-acid sequence, 233 residues long: DNA-directed RNA polymerase I subunit RPA34 (233 aa).

S10, S12, S14, and S60 each carry phosphoserine. Residues 179-191 show a composition bias toward basic and acidic residues; sequence DFHVAEEVKENKK. The tract at residues 179-233 is disordered; sequence DFHVAEEVKENKKEPKKRSHHDDEEESSEKKKKKKEKREKREKKDKKDKKKKHRD. Residues 208-233 are compositionally biased toward basic residues; sequence KKKKKKEKREKREKKDKKDKKKKHRD.

This sequence belongs to the eukaryotic RPA34 RNA polymerase subunit family. In terms of assembly, component of the RNA polymerase I (Pol I) complex consisting of 14 subunits: RPA135, RPA190, RPC40, RPA14, RPB5, RPO26, RPA43, RPB8, RPA12, RPB10, RPC19, RPC10, RPA49 and RPA34. The complex is composed of a horseshoe-shaped core containing ten subunits (RPA135, RPA190, RPB5, RPO26, RPB8, RPB10, RPC10, RPA12, RPC19 and RPC40) where RPA135 and RPA190 form the DNA-binding cleft. Outside of the core, RPA14 and RPA43 form the stalk that mediates interactions with transcription initiation factors and newly synthesized RNA. Forms a TFIIF-like heterodimer with RPA49; the heterodimer formed by RPA34 and RPA49 can be dissociated from the Pol I core giving rise to a 12 subunit form A* of Pol I (formerly called pol A) that shows impaired transcript elongation activity and increased sensitivity to alpha-amanitin. The heterodimer formed by RPA34 and RPA49 stabilizes subunit RPA12 and stimulates RPA12-dependent RNA cleavage.

It is found in the nucleus. It localises to the nucleolus. In terms of biological role, DNA-dependent RNA polymerases catalyze the transcription of DNA into RNA using the four ribonucleoside triphosphates as substrates. Component of RNA polymerase I (Pol I) which synthesizes ribosomal RNA precursors. Besides, RNA polymerase I has intrinsic RNA cleavage activity. The heterodimer formed by RPA34 and RPA49 stimulates transcript elongation by Pol I. The sequence is that of DNA-directed RNA polymerase I subunit RPA34 (RPA34) from Saccharomyces cerevisiae (strain ATCC 204508 / S288c) (Baker's yeast).